Consider the following 477-residue polypeptide: UDP-N-acetylmuramate--L-alanine ligase (477 aa).

117 to 123 (GTHGKTT) contributes to the ATP binding site.

Belongs to the MurCDEF family.

The protein localises to the cytoplasm. It catalyses the reaction UDP-N-acetyl-alpha-D-muramate + L-alanine + ATP = UDP-N-acetyl-alpha-D-muramoyl-L-alanine + ADP + phosphate + H(+). Its pathway is cell wall biogenesis; peptidoglycan biosynthesis. Cell wall formation. This Phenylobacterium zucineum (strain HLK1) protein is UDP-N-acetylmuramate--L-alanine ligase.